Reading from the N-terminus, the 191-residue chain is Fe/S biogenesis protein NfuA (191 aa).

[4Fe-4S] cluster-binding residues include cysteine 149 and cysteine 152.

It belongs to the NfuA family. In terms of assembly, homodimer. [4Fe-4S] cluster is required as a cofactor.

In terms of biological role, involved in iron-sulfur cluster biogenesis. Binds a 4Fe-4S cluster, can transfer this cluster to apoproteins, and thereby intervenes in the maturation of Fe/S proteins. Could also act as a scaffold/chaperone for damaged Fe/S proteins. In Edwardsiella ictaluri (strain 93-146), this protein is Fe/S biogenesis protein NfuA.